An 80-amino-acid polypeptide reads, in one-letter code: Translation initiation factor IF-1, chloroplastic (80 aa).

An S1-like domain is found at 1–72 (MKKQNLIDME…TKGRIIYRLR (72 aa)).

The protein belongs to the IF-1 family. Component of the 30S ribosomal translation pre-initiation complex which assembles on the 30S ribosome in the order IF-2 and IF-3, IF-1 and N-formylmethionyl-tRNA(fMet); mRNA recruitment can occur at any time during PIC assembly.

Its subcellular location is the plastid. The protein resides in the chloroplast. Its function is as follows. One of the essential components for the initiation of protein synthesis. Stabilizes the binding of IF-2 and IF-3 on the 30S subunit to which N-formylmethionyl-tRNA(fMet) subsequently binds. Helps modulate mRNA selection, yielding the 30S pre-initiation complex (PIC). Upon addition of the 50S ribosomal subunit IF-1, IF-2 and IF-3 are released leaving the mature 70S translation initiation complex. The chain is Translation initiation factor IF-1, chloroplastic from Adiantum capillus-veneris (Maidenhair fern).